Reading from the N-terminus, the 205-residue chain is CASP-like protein 2A1 (205 aa).

The Cytoplasmic portion of the chain corresponds to 1 to 35; the sequence is MMGDKGEKECATASSPIELGCGEGDESGNKSSMRT. A helical transmembrane segment spans residues 36–56; it reads VETLLRLVPVALCTVSLVVML. The Extracellular segment spans residues 57 to 77; it reads KNSQTNDFGSLSYSDLGAFRY. Residues 78–98 traverse the membrane as a helical segment; that stretch reads LVHANGICAGYSLLSAIFTAM. Over 99–106 the chain is Cytoplasmic; it reads PRPPTMSR. A helical membrane pass occupies residues 107–127; it reads AWTFFLLDQVLTYLILAAGAV. Over 128–157 the chain is Extracellular; the sequence is STEVVYLAYKGDEAVTWSDACSSFGGFCQK. A helical membrane pass occupies residues 158 to 178; that stretch reads TTASISITFVTVLCYAVLSLI. Residues 179-205 are Cytoplasmic-facing; the sequence is SSYKLFSKYDAPICFNGKGIEIAAFHS.

It belongs to the Casparian strip membrane proteins (CASP) family. In terms of assembly, homodimer and heterodimers.

Its subcellular location is the cell membrane. This chain is CASP-like protein 2A1, found in Vitis vinifera (Grape).